A 373-amino-acid chain; its full sequence is CCA-adding enzyme (373 aa).

ATP is bound by residues glycine 8 and arginine 11. 2 residues coordinate CTP: glycine 8 and arginine 11. Aspartate 21 and aspartate 23 together coordinate Mg(2+). Arginine 91, arginine 137, and arginine 140 together coordinate ATP. CTP contacts are provided by arginine 91, arginine 137, and arginine 140.

This sequence belongs to the tRNA nucleotidyltransferase/poly(A) polymerase family. Bacterial CCA-adding enzyme type 2 subfamily. Requires Mg(2+) as cofactor.

It carries out the reaction a tRNA precursor + 2 CTP + ATP = a tRNA with a 3' CCA end + 3 diphosphate. The catalysed reaction is a tRNA with a 3' CCA end + 2 CTP + ATP = a tRNA with a 3' CCACCA end + 3 diphosphate. Its function is as follows. Catalyzes the addition and repair of the essential 3'-terminal CCA sequence in tRNAs without using a nucleic acid template. Adds these three nucleotides in the order of C, C, and A to the tRNA nucleotide-73, using CTP and ATP as substrates and producing inorganic pyrophosphate. tRNA 3'-terminal CCA addition is required both for tRNA processing and repair. Also involved in tRNA surveillance by mediating tandem CCA addition to generate a CCACCA at the 3' terminus of unstable tRNAs. While stable tRNAs receive only 3'-terminal CCA, unstable tRNAs are marked with CCACCA and rapidly degraded. The protein is CCA-adding enzyme of Marinobacter nauticus (strain ATCC 700491 / DSM 11845 / VT8) (Marinobacter aquaeolei).